We begin with the raw amino-acid sequence, 338 residues long: tRNA N6-adenosine threonylcarbamoyltransferase (338 aa).

Fe cation is bound by residues histidine 111 and histidine 115. Substrate contacts are provided by residues 134–138, aspartate 167, glycine 180, and asparagine 272; that span reads LVSGG. Position 300 (aspartate 300) interacts with Fe cation.

The protein belongs to the KAE1 / TsaD family. Requires Fe(2+) as cofactor.

It localises to the cytoplasm. It catalyses the reaction L-threonylcarbamoyladenylate + adenosine(37) in tRNA = N(6)-L-threonylcarbamoyladenosine(37) in tRNA + AMP + H(+). Its function is as follows. Required for the formation of a threonylcarbamoyl group on adenosine at position 37 (t(6)A37) in tRNAs that read codons beginning with adenine. Is involved in the transfer of the threonylcarbamoyl moiety of threonylcarbamoyl-AMP (TC-AMP) to the N6 group of A37, together with TsaE and TsaB. TsaD likely plays a direct catalytic role in this reaction. This Aliivibrio salmonicida (strain LFI1238) (Vibrio salmonicida (strain LFI1238)) protein is tRNA N6-adenosine threonylcarbamoyltransferase.